The primary structure comprises 595 residues: Beta-lactamase-like protein ARB_00930 (595 aa).

The signal sequence occupies residues 1–18 (MVVCFLWLLLPYAATTLS). Residues Asn-70 and Asn-102 are each glycosylated (N-linked (GlcNAc...) asparagine). Ser-117 functions as the Acyl-ester intermediate in the catalytic mechanism. N-linked (GlcNAc...) asparagine glycosylation is found at Asn-147, Asn-156, and Asn-195. Tyr-235 serves as the catalytic Proton acceptor. Asn-249, Asn-461, and Asn-473 each carry an N-linked (GlcNAc...) asparagine glycan.

The protein belongs to the beta-lactamase family.

Its subcellular location is the secreted. It catalyses the reaction a beta-lactam + H2O = a substituted beta-amino acid. The polypeptide is Beta-lactamase-like protein ARB_00930 (Arthroderma benhamiae (strain ATCC MYA-4681 / CBS 112371) (Trichophyton mentagrophytes)).